Here is a 201-residue protein sequence, read N- to C-terminus: 3-isopropylmalate dehydratase small subunit (201 aa).

This sequence belongs to the LeuD family. LeuD type 1 subfamily. Heterodimer of LeuC and LeuD.

It catalyses the reaction (2R,3S)-3-isopropylmalate = (2S)-2-isopropylmalate. It participates in amino-acid biosynthesis; L-leucine biosynthesis; L-leucine from 3-methyl-2-oxobutanoate: step 2/4. Catalyzes the isomerization between 2-isopropylmalate and 3-isopropylmalate, via the formation of 2-isopropylmaleate. The protein is 3-isopropylmalate dehydratase small subunit of Nitrobacter winogradskyi (strain ATCC 25391 / DSM 10237 / CIP 104748 / NCIMB 11846 / Nb-255).